The following is a 244-amino-acid chain: Gas vesicle protein F (244 aa).

Belongs to the gas vesicle GvpF/GvpL family. Binds GvpA.

It is found in the gas vesicle. In terms of biological role, a minor component of the gas vesicle, may be involved in preventing GvpA aggregation during gas vesicle nucleation. Gas vesicles (GV) are hollow, gas filled proteinaceous nanostructures. During planktonic growth they allow positioning of the organism at a favorable depth for light or nutrient acquisition. Functionally, cluster expression in E.coli (gvpA1-gvpA2-gvpC-gvpN-gvpJ-gvpK-gvpF-gvpG-gvpV-gvpW) allows cells to float and produces irregularly shaped gas vesicles. This chain is Gas vesicle protein F, found in Nostoc sp. (strain PCC 7120 / SAG 25.82 / UTEX 2576).